A 368-amino-acid polypeptide reads, in one-letter code: Phospho-N-acetylmuramoyl-pentapeptide-transferase (368 aa).

Helical transmembrane passes span 2–22, 51–71, 80–100, 116–136, 166–186, 193–213, 234–254, 256–276, 277–297, and 340–360; these read IALI…TPLL, TLGG…SALY, PTWA…LGFI, VGGK…LALI, IVAI…WTNA, LDGL…IIAM, PLDL…FLWY, CNPA…GLFA, ALSI…LFVV, and FWIV…GNWV.

Belongs to the glycosyltransferase 4 family. MraY subfamily. Requires Mg(2+) as cofactor.

It localises to the cell membrane. It carries out the reaction UDP-N-acetyl-alpha-D-muramoyl-L-alanyl-gamma-D-glutamyl-meso-2,6-diaminopimeloyl-D-alanyl-D-alanine + di-trans,octa-cis-undecaprenyl phosphate = di-trans,octa-cis-undecaprenyl diphospho-N-acetyl-alpha-D-muramoyl-L-alanyl-D-glutamyl-meso-2,6-diaminopimeloyl-D-alanyl-D-alanine + UMP. It functions in the pathway cell wall biogenesis; peptidoglycan biosynthesis. Its function is as follows. Catalyzes the initial step of the lipid cycle reactions in the biosynthesis of the cell wall peptidoglycan: transfers peptidoglycan precursor phospho-MurNAc-pentapeptide from UDP-MurNAc-pentapeptide onto the lipid carrier undecaprenyl phosphate, yielding undecaprenyl-pyrophosphoryl-MurNAc-pentapeptide, known as lipid I. This is Phospho-N-acetylmuramoyl-pentapeptide-transferase from Bifidobacterium animalis subsp. lactis (strain AD011).